Consider the following 292-residue polypeptide: MSTISAALVMQLRERTGAGMMECKKFLIATNGDIEQAIIEMRKAGQAKADKKADRVAAEGIIVIARSSDERTAVMLEINSETDFVARDENFTNFANAVADAALTNLPKNIEDLSNQALSSGTTVEQARQELVAKIGENIKLRRLERMHCDGVIGYYLHGSRIGVMVALKNGSEALAKDIAMHVAASKPMVVSRDQVPAEAIENEREIFTAQAKESGKPQEIIDKMIDGRINKFIDEVSLLGQPYVKDPNIKVGQLLKEKNAEVISFVRYEVGEGIEKKEDNFVEEVMAQVRT.

An involved in Mg(2+) ion dislocation from EF-Tu region spans residues 82-85 (TDFV).

The protein belongs to the EF-Ts family.

The protein resides in the cytoplasm. Functionally, associates with the EF-Tu.GDP complex and induces the exchange of GDP to GTP. It remains bound to the aminoacyl-tRNA.EF-Tu.GTP complex up to the GTP hydrolysis stage on the ribosome. The sequence is that of Elongation factor Ts from Legionella pneumophila (strain Paris).